The chain runs to 228 residues: MDQVDLLSILTLGFVLGIKHAMEPDHVIAVSTIVCQSKKLWRSSLAGVFWGIGHTSTLLIFGMTIILMKKKISQEWSMSLEFLVGIILVYFGISAILSLKKTHEHSHSRLHLHTDHPIYTYKGIPYVKSLFIGIIHGLAGSAAMVLLTMSTVEKAWEGLLYILFFGAGTVLGMLSFTTLIGIPFTLSARKIRIHNAFIQITGFISTVFGIHYMYNLGVTEGLFKLWIR.

The next 5 helical transmembrane spans lie at 48-68 (VFWG…IILM), 79-99 (SLEF…ILSL), 130-150 (LFIG…LTMS), 162-182 (ILFF…LIGI), and 196-216 (AFIQ…MYNL).

It belongs to the NiCoT transporter (TC 2.A.52) family.

The protein localises to the cell membrane. Probably facilitates nickel incorporation. May constitute a multicomponent high-affinity nickel transporter. Not essential for the expression of catalytically active urease. This is Urease accessory protein UreH (ureH) from Bacillus sp. (strain TB-90).